The following is a 406-amino-acid chain: MIVQPKVRGFICTTAHPEGCARHVGEWINYAKQQPSLTGGPQKVLIIGASTGFGLASRIVAAFGAGAKTIGVFFERPASGKRTASPGWYNTAAFEKTALAAGLYAKSISGDAFSDEIKQQTIDLIQKDWQGGVDLVIYSIASPRRVHPRTGEIFNSVLKPIGQTYHNKTVDVMTGEVSPVSIEPATEKEIRDTEAVMGGDDWALWINALFKYNCLAEGVKTVAFTYIGPELTHAVYRNGTIGRAKLHLEKTARELDTQLESALSGQALISVNKALVTQASAAIPVVPLYISLLYKIMKEKNIHEGCIEQMWRLFKERLYSNQNIPTDSEGRIRIDDWEMREDVQAEIKRLWESINTGNVETLSDIAGYREDFYKLFGFGLNGIDYERGVEIEKAIPSITVTPENPE.

Residues 48-53 (GASTGF), 74-75 (FE), 111-112 (DA), and 140-141 (IA) contribute to the NAD(+) site. Tyr226 contacts substrate. The Proton donor role is filled by Tyr236. NAD(+)-binding positions include Lys245 and 275 to 277 (LVT).

This sequence belongs to the TER reductase family. In terms of assembly, monomer.

The catalysed reaction is a 2,3-saturated acyl-[ACP] + NAD(+) = a (2E)-enoyl-[ACP] + NADH + H(+). The protein operates within lipid metabolism; fatty acid biosynthesis. Involved in the final reduction of the elongation cycle of fatty acid synthesis (FAS II). Catalyzes the reduction of a carbon-carbon double bond in an enoyl moiety that is covalently linked to an acyl carrier protein (ACP). The protein is Enoyl-[acyl-carrier-protein] reductase [NADH] of Coxiella burnetii (strain Dugway 5J108-111).